We begin with the raw amino-acid sequence, 254 residues long: Phosphoglycerate mutase 1 (254 aa).

Substrate-binding positions include 10 to 17 (RHGESAWN) and 23 to 24 (SG). The active-site Tele-phosphohistidine intermediate is His-11. Phosphoserine is present on residues Ser-14 and Ser-23. Tyr-26 is subject to Phosphotyrosine. The residue at position 31 (Ser-31) is a Phosphoserine. Residues Arg-62, 89–92 (ERHY), and Lys-100 contribute to the substrate site. Glu-89 functions as the Proton donor/acceptor in the catalytic mechanism. Lys-106 is modified (N6-acetyllysine). 116–117 (RR) lines the substrate pocket. A Phosphoserine modification is found at Ser-118. 187-188 (GN) contributes to the substrate binding site. Lys-251 is modified (N6-acetyllysine; alternate). Lys-251 is modified (N6-succinyllysine; alternate). N6-acetyllysine is present on residues Lys-253 and Lys-254.

Belongs to the phosphoglycerate mutase family. BPG-dependent PGAM subfamily. As to quaternary structure, homodimer. Acetylated at Lys-253, Lys-253 and Lys-254 under high glucose condition. Acetylation increases catalytic activity. Under glucose restriction SIRT1 levels dramatically increase and it deacetylates the enzyme.

The enzyme catalyses (2R)-2-phosphoglycerate = (2R)-3-phosphoglycerate. The catalysed reaction is (2R)-3-phospho-glyceroyl phosphate = (2R)-2,3-bisphosphoglycerate + H(+). In terms of biological role, catalyzes the interconversion of 2-phosphoglycerate and 3-phosphoglyceratea crucial step in glycolysis, by using 2,3-bisphosphoglycerate. Also catalyzes the interconversion of (2R)-2,3-bisphosphoglycerate and (2R)-3-phospho-glyceroyl phosphate. The sequence is that of Phosphoglycerate mutase 1 from Pongo abelii (Sumatran orangutan).